The sequence spans 91 residues: Small ribosomal subunit protein uS19 (91 aa).

This sequence belongs to the universal ribosomal protein uS19 family.

In terms of biological role, protein S19 forms a complex with S13 that binds strongly to the 16S ribosomal RNA. In Erythrobacter litoralis (strain HTCC2594), this protein is Small ribosomal subunit protein uS19.